Consider the following 204-residue polypeptide: NADH-ubiquinone oxidoreductase subunit 9 (204 aa).

It belongs to the complex I 30 kDa subunit family. As to quaternary structure, complex I is composed of about 30 different subunits.

Its subcellular location is the mitochondrion inner membrane. The catalysed reaction is a ubiquinone + NADH + 5 H(+)(in) = a ubiquinol + NAD(+) + 4 H(+)(out). In terms of biological role, core subunit of the mitochondrial membrane respiratory chain NADH dehydrogenase (Complex I) that is believed to belong to the minimal assembly required for catalysis. Complex I functions in the transfer of electrons from NADH to the respiratory chain. The immediate electron acceptor for the enzyme is believed to be ubiquinone. In Reclinomonas americana, this protein is NADH-ubiquinone oxidoreductase subunit 9 (NAD9).